The primary structure comprises 524 residues: Beta-glucosidase 23 (524 aa).

Positions 1–24 are cleaved as a signal peptide; it reads MVLQKLPLIGLLLLLTIVASPANA. Q54 is an a beta-D-glucoside binding site. N-linked (GlcNAc...) asparagine glycosylation occurs at N60. A beta-D-glucoside is bound by residues H157 and 202–203; that span reads NE. The active-site Proton donor is E203. A disulfide bridge connects residues C222 and C230. 2 residues coordinate a beta-D-glucoside: Y346 and E418. E418 serves as the catalytic Nucleophile. N-linked (GlcNAc...) asparagine glycosylation occurs at N461. Residues W468, 475–476, and F484 contribute to the a beta-D-glucoside site; that span reads EW. N-linked (GlcNAc...) asparagine glycosylation is present at N494. Residues 521-524 carry the Prevents secretion from ER motif; sequence KDEL.

This sequence belongs to the glycosyl hydrolase 1 family. In terms of assembly, homodimers. Binds to the deubiquitinating enzyme AMSH3. The inactive form interacts with PBP1/JAL30 to form the PYK10 complex, at least composed of PYK10/BGLU23, BGLU21, BGLU22, JAL22, JAL23, PBP1/JAL30, PBP2/JAL31, JAL32, JAL33, JAL34, JAL35, GLL22 and GLL23. Post-translationally, forms interchain disulfide bonds. As to expression, expressed exclusively in roots.

The protein localises to the endoplasmic reticulum lumen. The enzyme catalyses Hydrolysis of terminal, non-reducing beta-D-glucosyl residues with release of beta-D-glucose.. Its activity is regulated as follows. Activated by tissue damage and upon binding to PBP1 or PBP2. In terms of biological role, beta-D-glucosidase active on scopolin &gt; esculin &gt;&gt; 4-MU-glucoside &gt;&gt; DIMBOA-glucoside. No activity with pNP-glucoside, oNP-glucoside and sinigrin as substrates. May possess beta-D-fucosidase activity. Required for the beneficial interaction with the endophytic fungus P.indica. May participate in the control of root colonization by P.indica by repressing defense responses and modulating other responses required for a mutualistic interaction. The polypeptide is Beta-glucosidase 23 (Arabidopsis thaliana (Mouse-ear cress)).